A 20-amino-acid polypeptide reads, in one-letter code: Beta-1,3-glucan-binding protein 2 (20 aa).

Belongs to the insect beta-1,3-glucan binding protein family. Monomer.

The protein resides in the secreted. Involved in the recognition of invading microorganisms causing their aggregation. Activates the phenoloxidase cascade. Binds specifically to beta-1,3-glucan. Binds the A.niger cell wall component alpha-1,3-glucan, a fungal pathogen-associated molecular pattern (PAMP) that activates the host immune response. The polypeptide is Beta-1,3-glucan-binding protein 2 (Galleria mellonella (Greater wax moth)).